Consider the following 289-residue polypeptide: Diaminopimelate epimerase (289 aa).

N11 and N78 together coordinate substrate. C87 functions as the Proton donor in the catalytic mechanism. Substrate-binding positions include 88-89 (GN), N163, N199, and 217-218 (ER). Residue C226 is the Proton acceptor of the active site. Position 227 to 228 (227 to 228 (GT)) interacts with substrate.

This sequence belongs to the diaminopimelate epimerase family. As to quaternary structure, homodimer.

The protein localises to the cytoplasm. The catalysed reaction is (2S,6S)-2,6-diaminopimelate = meso-2,6-diaminopimelate. The protein operates within amino-acid biosynthesis; L-lysine biosynthesis via DAP pathway; DL-2,6-diaminopimelate from LL-2,6-diaminopimelate: step 1/1. In terms of biological role, catalyzes the stereoinversion of LL-2,6-diaminopimelate (L,L-DAP) to meso-diaminopimelate (meso-DAP), a precursor of L-lysine and an essential component of the bacterial peptidoglycan. The protein is Diaminopimelate epimerase of Mycolicibacterium vanbaalenii (strain DSM 7251 / JCM 13017 / BCRC 16820 / KCTC 9966 / NRRL B-24157 / PYR-1) (Mycobacterium vanbaalenii).